Here is a 399-residue protein sequence, read N- to C-terminus: MTEINWKDNLRIAWFGNFLTGASISLVVPFMPIFVENLGVGSQQVAFYAGLAISVSAISAALFSPIWGILADKYGRKPMMIRAGLAMTITMGGLAFVPNIYWLIFLRLLNGVFAGFVPNATALIASQVPKEKSGSALGTLSTGVVAGTLTGPFIGGFIAELFGIRTVFLLVGSFLFLAAILTICFIKEDFQPVAKEKAIPTKELFTSVKYPYLLLNLFLTSFVIQFSAQSIGPILALYVRDLGQTENLLFVSGLIVSSMGFSSMMSAGVMGKLGDKVGNHRLLVVAQFYSVIIYLLCANASSPLQLGLYRFLFGLGTGALIPGVNALLSKMTPKAGISRVFAFNQVFFYLGGVVGPMAGSAVAGQFGYHAVFYATSLCVAFSCLFNLIQFRTLLKVKEI.

10 consecutive transmembrane segments (helical) span residues 12–34, 49–71, 84–106, 140–162, 167–186, 217–239, 248–270, 306–328, 340–362, and 366–388; these read IAWF…MPIF, AGLA…GILA, GLAM…LIFL, LSTG…AELF, VFLL…ICFI, LFLT…ALYV, LLFV…AGVM, LGLY…NALL, VFAF…GSAV, and FGYH…FNLI.

It belongs to the major facilitator superfamily. TCR/Tet family.

The protein resides in the cell membrane. Its function is as follows. Efflux pump for various substrates. In Streptococcus pneumoniae serotype 4 (strain ATCC BAA-334 / TIGR4), this protein is Multi-drug resistance efflux pump PmrA (pmrA).